Reading from the N-terminus, the 194-residue chain is Acid tolerance regulatory protein ActR (194 aa).

The Response regulatory domain maps to 24-138 (SLLIVDDDTA…DILAALIQRP (115 aa)). D73 is subject to 4-aspartylphosphate.

In terms of processing, phosphorylated by ActS.

In terms of biological role, member of the two-component regulatory system ActS/ActR acting in acid tolerance. These data implicate that a two-component sensor may be involved in pH sensing and/or response. In Sinorhizobium medicae (strain WSM419) (Ensifer medicae), this protein is Acid tolerance regulatory protein ActR (actR).